A 177-amino-acid chain; its full sequence is Large ribosomal subunit protein uL6 (177 aa).

The protein belongs to the universal ribosomal protein uL6 family. In terms of assembly, part of the 50S ribosomal subunit.

In terms of biological role, this protein binds to the 23S rRNA, and is important in its secondary structure. It is located near the subunit interface in the base of the L7/L12 stalk, and near the tRNA binding site of the peptidyltransferase center. The chain is Large ribosomal subunit protein uL6 from Cronobacter sakazakii (strain ATCC BAA-894) (Enterobacter sakazakii).